The primary structure comprises 261 residues: Indole-3-glycerol phosphate synthase (261 aa).

The protein belongs to the TrpC family.

The catalysed reaction is 1-(2-carboxyphenylamino)-1-deoxy-D-ribulose 5-phosphate + H(+) = (1S,2R)-1-C-(indol-3-yl)glycerol 3-phosphate + CO2 + H2O. Its pathway is amino-acid biosynthesis; L-tryptophan biosynthesis; L-tryptophan from chorismate: step 4/5. In Aeropyrum pernix (strain ATCC 700893 / DSM 11879 / JCM 9820 / NBRC 100138 / K1), this protein is Indole-3-glycerol phosphate synthase (trpC).